A 339-amino-acid chain; its full sequence is HTH-type transcriptional regulator KdgR (339 aa).

The HTH lacI-type domain maps to 9-64; that stretch reads TTIKDVAECAGVSKSTVSRYINGKIDAISPEKVKNIKKAIAELNYRPSKMAQGLKI. The H-T-H motif DNA-binding region spans 11–30; sequence IKDVAECAGVSKSTVSRYIN.

Its function is as follows. Transcriptional repressor of the kdgRKAT and kduID operons for pectin utilization. The chain is HTH-type transcriptional regulator KdgR (kdgR) from Bacillus subtilis (strain 168).